The primary structure comprises 502 residues: Aspartyl/glutamyl-tRNA(Asn/Gln) amidotransferase subunit B (502 aa).

The protein belongs to the GatB/GatE family. GatB subfamily. As to quaternary structure, heterotrimer of A, B and C subunits.

The enzyme catalyses L-glutamyl-tRNA(Gln) + L-glutamine + ATP + H2O = L-glutaminyl-tRNA(Gln) + L-glutamate + ADP + phosphate + H(+). It catalyses the reaction L-aspartyl-tRNA(Asn) + L-glutamine + ATP + H2O = L-asparaginyl-tRNA(Asn) + L-glutamate + ADP + phosphate + 2 H(+). In terms of biological role, allows the formation of correctly charged Asn-tRNA(Asn) or Gln-tRNA(Gln) through the transamidation of misacylated Asp-tRNA(Asn) or Glu-tRNA(Gln) in organisms which lack either or both of asparaginyl-tRNA or glutaminyl-tRNA synthetases. The reaction takes place in the presence of glutamine and ATP through an activated phospho-Asp-tRNA(Asn) or phospho-Glu-tRNA(Gln). In Pseudarthrobacter chlorophenolicus (strain ATCC 700700 / DSM 12829 / CIP 107037 / JCM 12360 / KCTC 9906 / NCIMB 13794 / A6) (Arthrobacter chlorophenolicus), this protein is Aspartyl/glutamyl-tRNA(Asn/Gln) amidotransferase subunit B.